The sequence spans 477 residues: UDP-N-acetylmuramoylalanine--D-glutamate ligase (477 aa).

127 to 133 provides a ligand contact to ATP; the sequence is GTNGKTT.

This sequence belongs to the MurCDEF family.

The protein localises to the cytoplasm. The catalysed reaction is UDP-N-acetyl-alpha-D-muramoyl-L-alanine + D-glutamate + ATP = UDP-N-acetyl-alpha-D-muramoyl-L-alanyl-D-glutamate + ADP + phosphate + H(+). Its pathway is cell wall biogenesis; peptidoglycan biosynthesis. Cell wall formation. Catalyzes the addition of glutamate to the nucleotide precursor UDP-N-acetylmuramoyl-L-alanine (UMA). The polypeptide is UDP-N-acetylmuramoylalanine--D-glutamate ligase (Prochlorococcus marinus (strain MIT 9515)).